The primary structure comprises 199 residues: MTTLTAQQIACVYAWLAQLFSRELDDEQLTQIASAQMAEWFSLLKSEPPLAAAVNELENCIATLTVRDDARLELAADFCGLFLMTDKQAALPYASAYKQDEQEIKRLLVEAGMETSGNFNEPADHLAIYLELLSHLHFSLGEGTVPARRIDSLRQKTLTALWQWLPEFAARCHQYDSFGFYAALSQLLLVLVECDHQNR.

It belongs to the TorD/DmsD family. TorD subfamily.

It is found in the cytoplasm. Functionally, involved in the biogenesis of TorA. Acts on TorA before the insertion of the molybdenum cofactor and, as a result, probably favors a conformation of the apoenzyme that is competent for acquiring the cofactor. The sequence is that of Chaperone protein TorD from Escherichia coli O8 (strain IAI1).